We begin with the raw amino-acid sequence, 132 residues long: Acyl-CoA thioester hydrolase YciA (132 aa).

A HotDog ACOT-type domain is found at 8-123; sequence PQGDLVLRTL…LFKYVAVDPE (116 aa).

The protein belongs to the acyl coenzyme A hydrolase family.

Catalyzes the hydrolysis of the thioester bond in palmitoyl-CoA and malonyl-CoA. The chain is Acyl-CoA thioester hydrolase YciA (yciA) from Escherichia coli O6:H1 (strain CFT073 / ATCC 700928 / UPEC).